A 237-amino-acid polypeptide reads, in one-letter code: Ribosomal RNA small subunit methyltransferase G (237 aa).

Residues glycine 78, phenylalanine 83, 129-130, and arginine 148 contribute to the S-adenosyl-L-methionine site; that span reads AE.

This sequence belongs to the methyltransferase superfamily. RNA methyltransferase RsmG family.

The protein localises to the cytoplasm. In terms of biological role, specifically methylates the N7 position of a guanine in 16S rRNA. The polypeptide is Ribosomal RNA small subunit methyltransferase G (Streptococcus pyogenes serotype M12 (strain MGAS9429)).